The sequence spans 66 residues: Toxin Boma6c (66 aa).

Residues 2-64 form the LCN-type CS-alpha/beta domain; sequence RDAYIAQNYN…VPIRIPGKCH (63 aa). Disulfide bonds link Cys-12–Cys-63, Cys-16–Cys-36, Cys-22–Cys-46, and Cys-26–Cys-48.

Belongs to the long (4 C-C) scorpion toxin superfamily. Sodium channel inhibitor family. Alpha subfamily. As to expression, expressed by the venom gland.

It localises to the secreted. Its function is as follows. Alpha toxins bind voltage-independently at site-3 of sodium channels (Nav) and inhibit the inactivation of the activated channels, thereby blocking neuronal transmission. In Buthus occitanus mardochei (Moroccan scorpion), this protein is Toxin Boma6c.